The sequence spans 257 residues: Imidazole glycerol phosphate synthase subunit HisF (257 aa).

Catalysis depends on residues aspartate 11 and aspartate 130.

The protein belongs to the HisA/HisF family. In terms of assembly, heterodimer of HisH and HisF.

The protein localises to the cytoplasm. It carries out the reaction 5-[(5-phospho-1-deoxy-D-ribulos-1-ylimino)methylamino]-1-(5-phospho-beta-D-ribosyl)imidazole-4-carboxamide + L-glutamine = D-erythro-1-(imidazol-4-yl)glycerol 3-phosphate + 5-amino-1-(5-phospho-beta-D-ribosyl)imidazole-4-carboxamide + L-glutamate + H(+). Its pathway is amino-acid biosynthesis; L-histidine biosynthesis; L-histidine from 5-phospho-alpha-D-ribose 1-diphosphate: step 5/9. Its function is as follows. IGPS catalyzes the conversion of PRFAR and glutamine to IGP, AICAR and glutamate. The HisF subunit catalyzes the cyclization activity that produces IGP and AICAR from PRFAR using the ammonia provided by the HisH subunit. The sequence is that of Imidazole glycerol phosphate synthase subunit HisF from Aeromonas hydrophila subsp. hydrophila (strain ATCC 7966 / DSM 30187 / BCRC 13018 / CCUG 14551 / JCM 1027 / KCTC 2358 / NCIMB 9240 / NCTC 8049).